A 930-amino-acid polypeptide reads, in one-letter code: Isoleucine--tRNA ligase (930 aa).

Residues 57–67 carry the 'HIGH' region motif; it reads PYANGNIHVGH. Glu-554 is a binding site for L-isoleucyl-5'-AMP. A 'KMSKS' region motif is present at residues 595–599; sequence KMSKS. Residue Lys-598 coordinates ATP. Zn(2+) contacts are provided by Cys-888, Cys-891, Cys-908, and Cys-911.

This sequence belongs to the class-I aminoacyl-tRNA synthetase family. IleS type 1 subfamily. As to quaternary structure, monomer. It depends on Zn(2+) as a cofactor.

The protein localises to the cytoplasm. The enzyme catalyses tRNA(Ile) + L-isoleucine + ATP = L-isoleucyl-tRNA(Ile) + AMP + diphosphate. Catalyzes the attachment of isoleucine to tRNA(Ile). As IleRS can inadvertently accommodate and process structurally similar amino acids such as valine, to avoid such errors it has two additional distinct tRNA(Ile)-dependent editing activities. One activity is designated as 'pretransfer' editing and involves the hydrolysis of activated Val-AMP. The other activity is designated 'posttransfer' editing and involves deacylation of mischarged Val-tRNA(Ile). The chain is Isoleucine--tRNA ligase from Streptococcus pneumoniae serotype 4 (strain ATCC BAA-334 / TIGR4).